The following is a 253-amino-acid chain: 5'/3'-nucleotidase SurE (253 aa).

4 residues coordinate a divalent metal cation: Asp8, Asp9, Ser39, and Asn92.

It belongs to the SurE nucleotidase family. A divalent metal cation serves as cofactor.

Its subcellular location is the cytoplasm. The enzyme catalyses a ribonucleoside 5'-phosphate + H2O = a ribonucleoside + phosphate. The catalysed reaction is a ribonucleoside 3'-phosphate + H2O = a ribonucleoside + phosphate. It carries out the reaction [phosphate](n) + H2O = [phosphate](n-1) + phosphate + H(+). Functionally, nucleotidase with a broad substrate specificity as it can dephosphorylate various ribo- and deoxyribonucleoside 5'-monophosphates and ribonucleoside 3'-monophosphates with highest affinity to 3'-AMP. Also hydrolyzes polyphosphate (exopolyphosphatase activity) with the preference for short-chain-length substrates (P20-25). Might be involved in the regulation of dNTP and NTP pools, and in the turnover of 3'-mononucleotides produced by numerous intracellular RNases (T1, T2, and F) during the degradation of various RNAs. This chain is 5'/3'-nucleotidase SurE, found in Salmonella paratyphi B (strain ATCC BAA-1250 / SPB7).